Reading from the N-terminus, the 163-residue chain is Small ribosomal subunit protein uS7 (163 aa).

It belongs to the universal ribosomal protein uS7 family. In terms of assembly, part of the 30S ribosomal subunit. Contacts proteins S9 and S11.

Functionally, one of the primary rRNA binding proteins, it binds directly to 16S rRNA where it nucleates assembly of the head domain of the 30S subunit. Is located at the subunit interface close to the decoding center, probably blocks exit of the E-site tRNA. This Rickettsia bellii (strain RML369-C) protein is Small ribosomal subunit protein uS7.